A 278-amino-acid polypeptide reads, in one-letter code: MALKTFNPTTPSQRQLVIVDRSSLYKGKPVKSLTEGLSSKGGRNNTGRITVRFQGGGHKRTYRLVDFKRRKFDVEATVERIEYDPNRTAYIALVKYADGDQAYILAPQRLAAGDKVIASEKAVDVKPGNTMPLQFIPVGSIIHNVEMKPGKGGQIARSAGGYAQLVGRDQGMAILRLNSGEQRLVHGTCLATIGAVSNPDHGNINDGKAGRSRWRGKKPHVRGVVMNPVDHPHGGGEGRTSGGRHPVTPWGKPTKGKRTRSNKSTDKMIMRSRHQRKK.

Residues 201–278 (HGNINDGKAG…IMRSRHQRKK (78 aa)) are disordered. Over residues 210–221 (GRSRWRGKKPHV) the composition is skewed to basic residues.

The protein belongs to the universal ribosomal protein uL2 family. Part of the 50S ribosomal subunit. Forms a bridge to the 30S subunit in the 70S ribosome.

One of the primary rRNA binding proteins. Required for association of the 30S and 50S subunits to form the 70S ribosome, for tRNA binding and peptide bond formation. It has been suggested to have peptidyltransferase activity; this is somewhat controversial. Makes several contacts with the 16S rRNA in the 70S ribosome. In Rhizobium rhizogenes (strain K84 / ATCC BAA-868) (Agrobacterium radiobacter), this protein is Large ribosomal subunit protein uL2.